The chain runs to 286 residues: Putative sugar uptake protein lmo0176 (286 aa).

The next 8 membrane-spanning stretches (helical) occupy residues 4-26 (MIALIPALLWGTVPLIITKFGGS), 33-55 (GMTLGALTFAVIVFFFTDPVYTL), 114-136 (LRIILGFIALALIVGGIFLTSYA), 149-167 (GLITLFISACGYVGLVVLI), 177-194 (AILPQAIGMVISALIMTH), 207-226 (LLLTIPGVIWAAGNVAMVHA), 230-252 (VGVATGFSLSQLGVVISTIGGII), and 264-283 (LFVIVGVVLVVLGGILIGVA).

The protein belongs to the GRP transporter (TC 2.A.7.5) family.

It localises to the cell membrane. In Listeria monocytogenes serovar 1/2a (strain ATCC BAA-679 / EGD-e), this protein is Putative sugar uptake protein lmo0176.